The primary structure comprises 146 residues: Type II secretion system core protein G (146 aa).

The propeptide at 1-9 (MKKMRKQTG) is leader sequence. The residue at position 10 (Phe-10) is an N-methylphenylalanine. The helical transmembrane segment at 10-30 (FTLLEVMVVVVILGILASFVV) threads the bilayer.

It belongs to the GSP G family. Type II secretion system is composed of four main components: the outer membrane complex, the inner membrane complex, the cytoplasmic secretion ATPase and the periplasm-spanning pseudopilus. Forms homomultimers. Interacts with EspL. In terms of processing, cleaved by the prepilin peptidase. Post-translationally, methylated by prepilin peptidase at the amino group of the N-terminal phenylalanine once the leader sequence is cleaved.

The protein localises to the cell inner membrane. Functionally, core component of the type II secretion system required for the energy-dependent secretion of extracellular factors such as proteases and toxins from the periplasm. Pseudopilin (pilin-like) protein that polymerizes to form the pseudopilus. Further polymerization triggers pseudopilus growth. The sequence is that of Type II secretion system core protein G (epsG) from Vibrio cholerae serotype O1 (strain ATCC 39315 / El Tor Inaba N16961).